Reading from the N-terminus, the 221-residue chain is Endo-1,4-beta-xylanase A (221 aa).

The first 16 residues, 1-16, serve as a signal peptide directing secretion; the sequence is MKFFATIAALVVGAVA. Residues 29-221 form the GH11 domain; that stretch reads PMLIERAGPG…GTGSASVTVS (193 aa). Residue Glu-114 is the Nucleophile of the active site. Catalysis depends on Glu-208, which acts as the Proton donor.

This sequence belongs to the glycosyl hydrolase 11 (cellulase G) family.

The protein resides in the secreted. The catalysed reaction is Endohydrolysis of (1-&gt;4)-beta-D-xylosidic linkages in xylans.. Its pathway is glycan degradation; xylan degradation. Endo-1,4-beta-xylanase involved in the hydrolysis of xylan, a major structural heterogeneous polysaccharide found in plant biomass representing the second most abundant polysaccharide in the biosphere, after cellulose. This chain is Endo-1,4-beta-xylanase A (xynA), found in Aureobasidium pullulans (Black yeast).